Here is a 121-residue protein sequence, read N- to C-terminus: Prefoldin subunit beta (121 aa).

Belongs to the prefoldin subunit beta family. Heterohexamer of two alpha and four beta subunits.

Its subcellular location is the cytoplasm. In terms of biological role, molecular chaperone capable of stabilizing a range of proteins. Seems to fulfill an ATP-independent, HSP70-like function in archaeal de novo protein folding. The protein is Prefoldin subunit beta of Methanosphaerula palustris (strain ATCC BAA-1556 / DSM 19958 / E1-9c).